Here is a 204-residue protein sequence, read N- to C-terminus: Methylthioribulose-1-phosphate dehydratase (204 aa).

Residues His-96 and His-98 each coordinate Zn(2+).

Belongs to the aldolase class II family. MtnB subfamily. It depends on Zn(2+) as a cofactor.

It carries out the reaction 5-(methylsulfanyl)-D-ribulose 1-phosphate = 5-methylsulfanyl-2,3-dioxopentyl phosphate + H2O. It functions in the pathway amino-acid biosynthesis; L-methionine biosynthesis via salvage pathway; L-methionine from S-methyl-5-thio-alpha-D-ribose 1-phosphate: step 2/6. Functionally, catalyzes the dehydration of methylthioribulose-1-phosphate (MTRu-1-P) into 2,3-diketo-5-methylthiopentyl-1-phosphate (DK-MTP-1-P). This is Methylthioribulose-1-phosphate dehydratase from Methylococcus capsulatus (strain ATCC 33009 / NCIMB 11132 / Bath).